The following is a 428-amino-acid chain: 3-phosphoshikimate 1-carboxyvinyltransferase (428 aa).

Lys20, Ser21, and Arg25 together coordinate 3-phosphoshikimate. Lys20 serves as a coordination point for phosphoenolpyruvate. Phosphoenolpyruvate contacts are provided by Gly92 and Arg120. Residues Ser166, Gln168, Asp314, and Lys341 each coordinate 3-phosphoshikimate. Gln168 provides a ligand contact to phosphoenolpyruvate. The active-site Proton acceptor is Asp314. Phosphoenolpyruvate is bound by residues Arg345 and Arg387.

The protein belongs to the EPSP synthase family. As to quaternary structure, monomer.

Its subcellular location is the cytoplasm. It carries out the reaction 3-phosphoshikimate + phosphoenolpyruvate = 5-O-(1-carboxyvinyl)-3-phosphoshikimate + phosphate. Its pathway is metabolic intermediate biosynthesis; chorismate biosynthesis; chorismate from D-erythrose 4-phosphate and phosphoenolpyruvate: step 6/7. Functionally, catalyzes the transfer of the enolpyruvyl moiety of phosphoenolpyruvate (PEP) to the 5-hydroxyl of shikimate-3-phosphate (S3P) to produce enolpyruvyl shikimate-3-phosphate and inorganic phosphate. This chain is 3-phosphoshikimate 1-carboxyvinyltransferase, found in Listeria monocytogenes serotype 4b (strain CLIP80459).